A 296-amino-acid polypeptide reads, in one-letter code: Heme oxygenase 1 (296 aa).

The Cytoplasmic portion of the chain corresponds to M1–S273. Heme b-binding residues include K21, H28, Y137, and R186. The segment at G231–R264 is disordered. Over residues A238 to E250 the composition is skewed to basic and acidic residues. Residues P274–M296 form a helical; Anchor for type IV membrane protein membrane-spanning segment.

It belongs to the heme oxygenase family. As to quaternary structure, homodimer and higher order homooligomer. Oligomerization is crucial for its stability and function in the endoplasmic reticulum. Post-translationally, a soluble form arises by proteolytic removal of the membrane anchor.

It is found in the endoplasmic reticulum membrane. It catalyses the reaction heme b + 3 reduced [NADPH--hemoprotein reductase] + 3 O2 = biliverdin IXalpha + CO + Fe(2+) + 3 oxidized [NADPH--hemoprotein reductase] + 3 H2O + H(+). Inhibited by metalloporphyrins in the following order of decreasing potency: tin mesoporphyrin &gt; tin protoporphyrin &gt; zinc protoporphyrin &gt; manganese protoporphyrin &gt; cobalt protoporphyrin. Its function is as follows. Catalyzes the oxidative cleavage of heme at the alpha-methene bridge carbon, released as carbon monoxide (CO), to generate biliverdin IXalpha, while releasing the central heme iron chelate as ferrous iron. Affords protection against programmed cell death and this cytoprotective effect relies on its ability to catabolize free heme and prevent it from sensitizing cells to undergo apoptosis. In terms of biological role, catalyzes the oxidative cleavage of heme at the alpha-methene bridge carbon, released as carbon monoxide (CO), to generate biliverdin IXalpha, while releasing the central heme iron chelate as ferrous iron. This is Heme oxygenase 1 (HMOX1) from Gallus gallus (Chicken).